Reading from the N-terminus, the 260-residue chain is Hydroxyethylthiazole kinase (260 aa).

Position 38 (Met38) interacts with substrate. ATP-binding residues include Arg114 and Thr159. Gly186 lines the substrate pocket.

It belongs to the Thz kinase family. The cofactor is Mg(2+).

The enzyme catalyses 5-(2-hydroxyethyl)-4-methylthiazole + ATP = 4-methyl-5-(2-phosphooxyethyl)-thiazole + ADP + H(+). The protein operates within cofactor biosynthesis; thiamine diphosphate biosynthesis; 4-methyl-5-(2-phosphoethyl)-thiazole from 5-(2-hydroxyethyl)-4-methylthiazole: step 1/1. Its function is as follows. Catalyzes the phosphorylation of the hydroxyl group of 4-methyl-5-beta-hydroxyethylthiazole (THZ). In Helicobacter pylori (strain HPAG1), this protein is Hydroxyethylthiazole kinase.